A 457-amino-acid chain; its full sequence is Argininosuccinate lyase (457 aa).

It belongs to the lyase 1 family. Argininosuccinate lyase subfamily.

It is found in the cytoplasm. The enzyme catalyses 2-(N(omega)-L-arginino)succinate = fumarate + L-arginine. Its pathway is amino-acid biosynthesis; L-arginine biosynthesis; L-arginine from L-ornithine and carbamoyl phosphate: step 3/3. This chain is Argininosuccinate lyase, found in Escherichia coli O127:H6 (strain E2348/69 / EPEC).